The following is a 395-amino-acid chain: Transcription termination/antitermination protein NusA (395 aa).

The region spanning 137 to 201 is the S1 motif domain; the sequence is NSVLMGQVIL…TKKGLLLELS (65 aa). KH domains lie at 243 to 291 and 331 to 378; these read SHNS…TLAL and KVRL…NENE.

Belongs to the NusA family. In terms of assembly, monomer. Binds directly to the core enzyme of the DNA-dependent RNA polymerase and to nascent RNA.

It localises to the cytoplasm. Functionally, participates in both transcription termination and antitermination. The sequence is that of Transcription termination/antitermination protein NusA from Helicobacter pylori (strain J99 / ATCC 700824) (Campylobacter pylori J99).